The chain runs to 346 residues: DNA-directed RNA polymerases I and III subunit RPAC1 (346 aa).

Position 2 is an N-acetylalanine (A2).

It belongs to the archaeal Rpo3/eukaryotic RPB3 RNA polymerase subunit family. As to quaternary structure, component of the RNA polymerase I and RNA polymerase III complexes consisting of at least 13 and 17 subunits, respectively. Pol I complex consists of a ten-subunit catalytic core composed of POLR1A/RPA1, POLR1B/RPA2, POLR1C/RPAC1, POLR1D/RPAC2, POLR1H/RPA12, POLR2E/RPABC1, POLR2F/RPABC2, POLR2H/RPABC3, POLR2K/RPABC4 and POLR2L/RPABC5; a mobile stalk subunit POLR1F/RPA43 protruding from the core and additional subunits homologous to general transcription factors POLR1E/RPA49 and POLR1G/RPA34. Part of Pol I pre-initiation complex (PIC), in which Pol I core assembles with RRN3 and promoter-bound UTBF and SL1/TIF-IB complex. Pol III complex consists of a ten-subunit catalytic core composed of POLR3A/RPC1, POLR3B/RPC2, POLR1C/RPAC1, POLR1D/RPAC2, POLR3K/RPC10, POLR2E/RPABC1, POLR2F/RPABC2, POLR2H/RPABC3, POLR2K/RPABC4 and POLR2L/RPABC5; a mobile stalk composed of two subunits POLR3H/RPC8 and CRCP/RPC9, protruding from the core and functioning primarily in transcription initiation; and additional subunits homologous to general transcription factors of the RNA polymerase II machinery, POLR3C/RPC3-POLR3F/RPC6-POLR3G/RPC7 heterotrimer required for transcription initiation and POLR3D/RPC4-POLR3E/RPC5 heterodimer involved in both transcription initiation and termination.

Its subcellular location is the nucleus. The protein localises to the cytoplasm. It is found in the cytosol. DNA-dependent RNA polymerase catalyzes the transcription of DNA into RNA using the four ribonucleoside triphosphates as substrates. Common component of RNA polymerases I and III which synthesize ribosomal RNA precursors and short non-coding RNAs including 5S rRNA, snRNAs, tRNAs and miRNAs, respectively. POLR1C/RPAC1 is part of the polymerase core and may function as a clamp element that moves to open and close the cleft. The polypeptide is DNA-directed RNA polymerases I and III subunit RPAC1 (Mus musculus (Mouse)).